A 191-amino-acid polypeptide reads, in one-letter code: Orotate phosphoribosyltransferase (191 aa).

116-124 (EDVVTTGGS) provides a ligand contact to 5-phospho-alpha-D-ribose 1-diphosphate. Positions 120 and 148 each coordinate orotate.

This sequence belongs to the purine/pyrimidine phosphoribosyltransferase family. PyrE subfamily. As to quaternary structure, homodimer. Mg(2+) is required as a cofactor.

The catalysed reaction is orotidine 5'-phosphate + diphosphate = orotate + 5-phospho-alpha-D-ribose 1-diphosphate. It participates in pyrimidine metabolism; UMP biosynthesis via de novo pathway; UMP from orotate: step 1/2. Functionally, catalyzes the transfer of a ribosyl phosphate group from 5-phosphoribose 1-diphosphate to orotate, leading to the formation of orotidine monophosphate (OMP). The sequence is that of Orotate phosphoribosyltransferase from Carboxydothermus hydrogenoformans (strain ATCC BAA-161 / DSM 6008 / Z-2901).